We begin with the raw amino-acid sequence, 427 residues long: MSLMFLRRAGNIKGRNIRFALQRGSVGYSQQSSEACKNFLNTTQLRTMVQTAALHGPKPMDSSHIKVTNVKELKPLPEWKSLKFGENFTDHMLIMKWNREKGWSTPEIVPFGKLCFHPASSVFHYGFECFEGMKAFRDEKGVPRLFRPIKNAERMLSTGTRISLPSFDPAELAEIIRKFVAHENRWVPDQRGYSLYIRPTFIGTDEALGVHHCDNAMLYVIASPVGPYYSSGFKAVKLCCSEESVRAWPGGTGHYKLGGNYAPSVLPQKEAAKKGYAQILWLYGDEDYITEVGTMNCFTVWINKNGEKEIITAPLDGMILPGVTRDSILEICRERLAPKGWKITEGKYSMKEVAQASKEGRLLEVFGAGTAALVSPVKAINYKGTEYEIPMPEGQEAGPITSEISKWILDIQYGKEPNNPWSVPALP.

Residues 1 to 47 (MSLMFLRRAGNIKGRNIRFALQRGSVGYSQQSSEACKNFLNTTQLRT) constitute a mitochondrion transit peptide. N6-(pyridoxal phosphate)lysine is present on Lys-256.

It belongs to the class-IV pyridoxal-phosphate-dependent aminotransferase family. Pyridoxal 5'-phosphate is required as a cofactor.

It localises to the mitochondrion. The protein resides in the nucleus. It is found in the cytoplasm. The catalysed reaction is L-leucine + 2-oxoglutarate = 4-methyl-2-oxopentanoate + L-glutamate. The enzyme catalyses L-isoleucine + 2-oxoglutarate = (S)-3-methyl-2-oxopentanoate + L-glutamate. It catalyses the reaction L-valine + 2-oxoglutarate = 3-methyl-2-oxobutanoate + L-glutamate. In terms of biological role, catalyzes the first reaction in the catabolism of the essential branched chain amino acids leucine, isoleucine, and valine. In Schizosaccharomyces pombe (strain 972 / ATCC 24843) (Fission yeast), this protein is Branched-chain-amino-acid aminotransferase, mitochondrial (eca39).